Reading from the N-terminus, the 72-residue chain is Translation initiation factor IF-1 (72 aa).

Residues 1–72 enclose the S1-like domain; the sequence is MSKEDVIEVE…SRGRIVYRFK (72 aa).

It belongs to the IF-1 family. Component of the 30S ribosomal translation pre-initiation complex which assembles on the 30S ribosome in the order IF-2 and IF-3, IF-1 and N-formylmethionyl-tRNA(fMet); mRNA recruitment can occur at any time during PIC assembly.

Its subcellular location is the cytoplasm. In terms of biological role, one of the essential components for the initiation of protein synthesis. Stabilizes the binding of IF-2 and IF-3 on the 30S subunit to which N-formylmethionyl-tRNA(fMet) subsequently binds. Helps modulate mRNA selection, yielding the 30S pre-initiation complex (PIC). Upon addition of the 50S ribosomal subunit IF-1, IF-2 and IF-3 are released leaving the mature 70S translation initiation complex. The polypeptide is Translation initiation factor IF-1 (Desulfitobacterium hafniense (strain Y51)).